The chain runs to 197 residues: Putative peptidyl-prolyl cis-trans isomerase (197 aa).

Residues 14 to 195 enclose the PPIase cyclophilin-type domain; sequence NEIKLIMHTN…HDITIDSIEI (182 aa).

This sequence belongs to the cyclophilin-type PPIase family.

The catalysed reaction is [protein]-peptidylproline (omega=180) = [protein]-peptidylproline (omega=0). In terms of biological role, PPIases accelerate the folding of proteins. It catalyzes the cis-trans isomerization of proline imidic peptide bonds in oligopeptides. This chain is Putative peptidyl-prolyl cis-trans isomerase, found in Staphylococcus saprophyticus subsp. saprophyticus (strain ATCC 15305 / DSM 20229 / NCIMB 8711 / NCTC 7292 / S-41).